Consider the following 934-residue polypeptide: 2-oxoglutarate dehydrogenase E1 component (934 aa).

Belongs to the alpha-ketoglutarate dehydrogenase family. As to quaternary structure, homodimer. Part of the 2-oxoglutarate dehydrogenase (OGDH) complex composed of E1 (2-oxoglutarate dehydrogenase), E2 (dihydrolipoamide succinyltransferase) and E3 (dihydrolipoamide dehydrogenase); the complex contains multiple copies of the three enzymatic components (E1, E2 and E3). Thiamine diphosphate is required as a cofactor.

It carries out the reaction N(6)-[(R)-lipoyl]-L-lysyl-[protein] + 2-oxoglutarate + H(+) = N(6)-[(R)-S(8)-succinyldihydrolipoyl]-L-lysyl-[protein] + CO2. E1 component of the 2-oxoglutarate dehydrogenase (OGDH) complex which catalyzes the decarboxylation of 2-oxoglutarate, the first step in the conversion of 2-oxoglutarate to succinyl-CoA and CO(2). This Coxiella burnetii (strain RSA 493 / Nine Mile phase I) protein is 2-oxoglutarate dehydrogenase E1 component (sucA).